A 262-amino-acid chain; its full sequence is Demethyldecarbamoylnovobiocin O-methyltransferase (262 aa).

Residue 64–65 (TM) participates in S-adenosyl-L-methionine binding. The active-site Proton acceptor is the Glu72. Residues 92 to 96 (ETGVW), 122 to 126 (DSFQG), Phe178, 196 to 197 (DG), and Ser202 each bind S-adenosyl-L-methionine. A Mg(2+)-binding site is contributed by Asp196. Residues Asp223 and Asp224 each contribute to the Mg(2+) site.

Belongs to the methyltransferase TylF/MycF family. As to quaternary structure, homodimer. The cofactor is Mg(2+).

It catalyses the reaction desmethyldescarbamoylnovobiocin + S-adenosyl-L-methionine = descarbamoylnovobiocin + S-adenosyl-L-homocysteine + H(+). It functions in the pathway antibiotic biosynthesis; novobiocin biosynthesis. In terms of biological role, S-adenosyl-L-methionine-dependent O-methyltransferase that methylates at 4-OH of the noviose moiety, the penultimate step in the novobiocin biosynthesis pathway. Novobiocin is an aminocoumarin family antibiotic that targets bacterial DNA gyrases. This is Demethyldecarbamoylnovobiocin O-methyltransferase (novP) from Streptomyces niveus (Streptomyces spheroides).